We begin with the raw amino-acid sequence, 299 residues long: Taste receptor type 2 member 19 (299 aa).

Position 1 (Met1) is a topological domain, extracellular. Residues 2–22 traverse the membrane as a helical segment; it reads MCFLLIISSILVVFAFVLGNV. Over 23 to 55 the chain is Cytoplasmic; it reads ANGFIALVNVIDWVNTRKISSAEQILTALVVSR. The helical transmembrane segment at 56–76 threads the bilayer; the sequence is IGLLWVMLFLWYATVFNSALY. Topologically, residues 77–87 are extracellular; it reads GLEVRIVASNA. The helical transmembrane segment at 88–108 threads the bilayer; sequence WAVTNHFSMWLAASLSIFCLL. Over 109 to 127 the chain is Cytoplasmic; that stretch reads KIANFSNLISLHLKKRIKS. A helical transmembrane segment spans residues 128 to 148; sequence VVLVILLGPLVFLICNLAVIT. Over 149–181 the chain is Extracellular; the sequence is MDERVWTKEYEGNVTWKIKLRNAIHLSSLTVTT. Asn161 carries N-linked (GlcNAc...) asparagine glycosylation. Residues 182–202 form a helical membrane-spanning segment; the sequence is LANLIPFTLSLICFLLLICSL. The Cytoplasmic segment spans residues 203–226; the sequence is CKHLKKMRLHSKGSQDPSTKVHIK. Residues 227–247 traverse the membrane as a helical segment; it reads ALQTVTSFLMLFAIYFLCIIT. The Extracellular segment spans residues 248–259; it reads STWNLRTQQSKL. A helical membrane pass occupies residues 260–280; sequence VLLLCQTVAIMYPSFHSFILI. The Cytoplasmic portion of the chain corresponds to 281 to 299; it reads MGSRKLKQTFLSVLWQMTR.

It belongs to the G-protein coupled receptor T2R family. As to expression, expressed in subsets of taste receptor cells of the tongue and exclusively in gustducin-positive cells.

The protein localises to the membrane. Receptor that may play a role in the perception of bitterness and is gustducin-linked. May play a role in sensing the chemical composition of the gastrointestinal content. The activity of this receptor may stimulate alpha gustducin, mediate PLC-beta-2 activation and lead to the gating of TRPM5. This chain is Taste receptor type 2 member 19 (TAS2R19), found in Homo sapiens (Human).